The chain runs to 289 residues: Xylosylprotein 4-beta-galactosyltransferase (289 aa).

Over 1–6 (MKLKTR) the chain is Cytoplasmic. The helical; Signal-anchor for type II membrane protein transmembrane segment at 7–27 (LILSGTILISLAACYFLVLLV) threads the bilayer. Residues 28-289 (LDLEITRDLM…DLNWTPYCKS (262 aa)) lie on the Lumenal side of the membrane. 58 to 62 (PYRDR) serves as a coordination point for UDP-alpha-D-galactose. Residues Asn81 and Asn90 are each glycosylated (N-linked (GlcNAc...) asparagine). UDP-alpha-D-galactose is bound by residues 97-99 (FNR), 123-124 (VD), Tyr154, and Trp184. A Mn(2+)-binding site is contributed by Asp124. 186–189 (LEDD) is an N-acetyl-D-glucosamine binding site. N-linked (GlcNAc...) asparagine glycosylation is present at Asn201. The interval 214-236 (NTFRHIHGPKRKRDYTPKKNDKN) is disordered. A compositionally biased stretch (basic residues) spans 217-226 (RHIHGPKRKR). A Mn(2+)-binding site is contributed by His218. 218-220 (HIH) contacts UDP-alpha-D-galactose. Residues 227 to 236 (DYTPKKNDKN) show a composition bias toward basic and acidic residues.

This sequence belongs to the glycosyltransferase 7 family. The cofactor is Mn(2+).

The protein localises to the membrane. The enzyme catalyses 3-O-(beta-D-xylosyl)-L-seryl-[protein] + UDP-alpha-D-galactose = 3-O-(beta-D-galactosyl-(1-&gt;4)-beta-D-xylosyl)-L-seryl-[protein] + UDP + H(+). It functions in the pathway protein modification; protein glycosylation. In terms of biological role, glycosyltransferase required for the biosynthesis of the tetrasaccharide (GlcA-Gal-Gal-Xyl-)Ser core linker of heparan sulfate and chondroitin sulfate. Required for embryonic development. Involved in vulval epithelium invagination. Required for axon regeneration after injury. The chain is Xylosylprotein 4-beta-galactosyltransferase (sqv-3) from Caenorhabditis elegans.